The sequence spans 286 residues: Formamidopyrimidine-DNA glycosylase (286 aa).

Residue Pro2 is the Schiff-base intermediate with DNA of the active site. The Proton donor role is filled by Glu3. Lys60 serves as the catalytic Proton donor; for beta-elimination activity. Residues His103, Arg122, and Arg167 each contribute to the DNA site. An FPG-type zinc finger spans residues 252 to 286; it reads WVYRRNQKPCRKCGTLIEKTKVAGRSTHWCPNCQN. Catalysis depends on Arg276, which acts as the Proton donor; for delta-elimination activity.

Belongs to the FPG family. Monomer. Requires Zn(2+) as cofactor.

It carries out the reaction Hydrolysis of DNA containing ring-opened 7-methylguanine residues, releasing 2,6-diamino-4-hydroxy-5-(N-methyl)formamidopyrimidine.. The catalysed reaction is 2'-deoxyribonucleotide-(2'-deoxyribose 5'-phosphate)-2'-deoxyribonucleotide-DNA = a 3'-end 2'-deoxyribonucleotide-(2,3-dehydro-2,3-deoxyribose 5'-phosphate)-DNA + a 5'-end 5'-phospho-2'-deoxyribonucleoside-DNA + H(+). Involved in base excision repair of DNA damaged by oxidation or by mutagenic agents. Acts as a DNA glycosylase that recognizes and removes damaged bases. Has a preference for oxidized purines, such as 7,8-dihydro-8-oxoguanine (8-oxoG). Has AP (apurinic/apyrimidinic) lyase activity and introduces nicks in the DNA strand. Cleaves the DNA backbone by beta-delta elimination to generate a single-strand break at the site of the removed base with both 3'- and 5'-phosphates. This Prochlorococcus marinus (strain MIT 9211) protein is Formamidopyrimidine-DNA glycosylase.